Consider the following 176-residue polypeptide: ATP synthase subunit b (176 aa).

Residues 7–27 traverse the membrane as a helical segment; the sequence is IQIPDGSAIFVLLTFILLMFI. Residues 75-94 are disordered; sequence SQSQATALMENARKSSEEQS. Positions 85 to 94 are enriched in basic and acidic residues; it reads NARKSSEEQS.

This sequence belongs to the ATPase B chain family. In terms of assembly, F-type ATPases have 2 components, F(1) - the catalytic core - and F(0) - the membrane proton channel. F(1) has five subunits: alpha(3), beta(3), gamma(1), delta(1), epsilon(1). F(0) has three main subunits: a(1), b(2) and c(10-14). The alpha and beta chains form an alternating ring which encloses part of the gamma chain. F(1) is attached to F(0) by a central stalk formed by the gamma and epsilon chains, while a peripheral stalk is formed by the delta and b chains.

It is found in the cell membrane. In terms of biological role, f(1)F(0) ATP synthase produces ATP from ADP in the presence of a proton or sodium gradient. F-type ATPases consist of two structural domains, F(1) containing the extramembraneous catalytic core and F(0) containing the membrane proton channel, linked together by a central stalk and a peripheral stalk. During catalysis, ATP synthesis in the catalytic domain of F(1) is coupled via a rotary mechanism of the central stalk subunits to proton translocation. Component of the F(0) channel, it forms part of the peripheral stalk, linking F(1) to F(0). The protein is ATP synthase subunit b of Oenococcus oeni (strain ATCC BAA-331 / PSU-1).